The primary structure comprises 476 residues: Sulfate adenylyltransferase subunit 1 (476 aa).

One can recognise a tr-type G domain in the interval 24–239; the sequence is KSLLRFLTCG…LLETVDVDYE (216 aa). Residues 33–40 form a G1 region; sequence GSVDDGKS. Position 33–40 (33–40) interacts with GTP; that stretch reads GSVDDGKS. The segment at 91–95 is G2; that stretch reads GITID. Positions 112–115 are G3; sequence DTPG. GTP contacts are provided by residues 112-116 and 167-170; these read DTPGH and NKMD. A G4 region spans residues 167-170; the sequence is NKMD. The tract at residues 205 to 207 is G5; the sequence is SAL.

It belongs to the TRAFAC class translation factor GTPase superfamily. Classic translation factor GTPase family. CysN/NodQ subfamily. In terms of assembly, heterodimer composed of CysD, the smaller subunit, and CysN.

It carries out the reaction sulfate + ATP + H(+) = adenosine 5'-phosphosulfate + diphosphate. It participates in sulfur metabolism; hydrogen sulfide biosynthesis; sulfite from sulfate: step 1/3. In terms of biological role, with CysD forms the ATP sulfurylase (ATPS) that catalyzes the adenylation of sulfate producing adenosine 5'-phosphosulfate (APS) and diphosphate, the first enzymatic step in sulfur assimilation pathway. APS synthesis involves the formation of a high-energy phosphoric-sulfuric acid anhydride bond driven by GTP hydrolysis by CysN coupled to ATP hydrolysis by CysD. This is Sulfate adenylyltransferase subunit 1 from Vibrio parahaemolyticus serotype O3:K6 (strain RIMD 2210633).